A 1795-amino-acid chain; its full sequence is Putative surface cell antigen sca2 (1795 aa).

The signal sequence occupies residues 1-33 (MNLQNSHSKKYVLTFFMSTCLLTSSFLSTSARA). Residues 360-373 (FLNNNDTTKPSTGR) show a composition bias toward polar residues. Disordered stretches follow at residues 360 to 391 (FLNN…SNQS), 664 to 709 (LEQT…SSNS), and 1354 to 1441 (KQEN…DEEL). Pro residues predominate over residues 672–700 (PNPPPLPLNGGIPNPPPLPLNGSMPPPPL). Basic and acidic residues-rich tracts occupy residues 1364–1383 (SSTK…EQSD) and 1398–1409 (SKNDKSSDDKKS). Over residues 1417–1432 (DEDDTGYATDEEELEE) the composition is skewed to acidic residues. An Autotransporter domain is found at 1516–1795 (ETSINRGVWI…QGLIKLKVNL (280 aa)).

The protein resides in the cell outer membrane. The sequence is that of Putative surface cell antigen sca2 (sca2) from Rickettsia conorii (strain ATCC VR-613 / Malish 7).